The chain runs to 488 residues: Glutamyl-tRNA(Gln) amidotransferase subunit A (488 aa).

Residues K78 and S153 each act as charge relay system in the active site. Residue S177 is the Acyl-ester intermediate of the active site.

This sequence belongs to the amidase family. GatA subfamily. Heterotrimer of A, B and C subunits.

The catalysed reaction is L-glutamyl-tRNA(Gln) + L-glutamine + ATP + H2O = L-glutaminyl-tRNA(Gln) + L-glutamate + ADP + phosphate + H(+). Allows the formation of correctly charged Gln-tRNA(Gln) through the transamidation of misacylated Glu-tRNA(Gln) in organisms which lack glutaminyl-tRNA synthetase. The reaction takes place in the presence of glutamine and ATP through an activated gamma-phospho-Glu-tRNA(Gln). This Thermoanaerobacter pseudethanolicus (strain ATCC 33223 / 39E) (Clostridium thermohydrosulfuricum) protein is Glutamyl-tRNA(Gln) amidotransferase subunit A.